Reading from the N-terminus, the 351-residue chain is Rhodopsin (351 aa).

Residues 1–36 (MNGTEGPYFYVPMVNTTGVVRSPYEYPQYYLVNPAA) are Extracellular-facing. 2 N-linked (GlcNAc...) asparagine glycosylation sites follow: Asn2 and Asn15. The chain crosses the membrane as a helical span at residues 37 to 61 (FAVLGAYMFFLIIFGFPINFLTLYV). The Cytoplasmic segment spans residues 62–73 (TLEHKKLRTPLN). The helical transmembrane segment at 74-96 (YILLNLAVADLFMVIGGFTTTMY) threads the bilayer. The Extracellular segment spans residues 97–110 (SSMHGYFVLGRLGC). A disulfide bridge connects residues Cys110 and Cys187. A helical transmembrane segment spans residues 111–133 (NLEGFSATLGGMISLWSLAVLAI). The 'Ionic lock' involved in activated form stabilization motif lies at 134-136 (ERW). The Cytoplasmic portion of the chain corresponds to 134-152 (ERWVVVCKPTSNFRFGENH). Residues 153 to 173 (AIMGVSLTWTMALACTVPPLV) form a helical membrane-spanning segment. Over 174-202 (GWSRYIPEGMQCSCGIDYYTRAEGFNNES) the chain is Extracellular. Asn200 carries N-linked (GlcNAc...) asparagine glycosylation. The chain crosses the membrane as a helical span at residues 203-224 (FVLYMFFCHFMVPLIIIFFCYG). The Cytoplasmic segment spans residues 225–252 (RLLCAVKEAAAAQQESETTQRAEREVTR). The chain crosses the membrane as a helical span at residues 253-274 (MVILMVIGYLVCWLPYASVAWF). The Extracellular portion of the chain corresponds to 275–286 (IFTHQGSEFGPL). The chain crosses the membrane as a helical span at residues 287 to 308 (FMTIPAFFAKSSSIYNPVIYIC). Lys296 bears the N6-(retinylidene)lysine mark. At 309 to 351 (MNKQFRNCMITTLFCGKNPFEGEEEGASSTKTEASSASSVSPA) the chain is on the cytoplasmic side. Cys323 carries S-palmitoyl cysteine lipidation. Residues 330 to 351 (GEEEGASSTKTEASSASSVSPA) form a disordered region. Residues 335–351 (ASSTKTEASSASSVSPA) are compositionally biased toward low complexity.

It belongs to the G-protein coupled receptor 1 family. Opsin subfamily. Phosphorylated on some or all of the serine and threonine residues present in the C-terminal region. Post-translationally, contains one covalently linked retinal chromophore.

The protein localises to the membrane. The protein resides in the cell projection. It localises to the cilium. It is found in the photoreceptor outer segment. Photoreceptor required for image-forming vision at low light intensity. While most salt water fish species use retinal as chromophore, most freshwater fish use 3-dehydroretinal, or a mixture of retinal and 3-dehydroretinal. Light-induced isomerization of 11-cis to all-trans retinal triggers a conformational change that activates signaling via G-proteins. Subsequent receptor phosphorylation mediates displacement of the bound G-protein alpha subunit by arrestin and terminates signaling. The sequence is that of Rhodopsin (rho) from Neoniphon sammara (Spotfin squirrelfish).